The primary structure comprises 300 residues: Epimerase family protein SAR0825 (300 aa).

The protein belongs to the NAD(P)-dependent epimerase/dehydratase family. SDR39U1 subfamily.

The chain is Epimerase family protein SAR0825 from Staphylococcus aureus (strain MRSA252).